A 556-amino-acid polypeptide reads, in one-letter code: DNA ligase (556 aa).

E245 contributes to the ATP binding site. K247 serves as the catalytic N6-AMP-lysine intermediate. ATP-binding residues include R252, R267, E296, F336, R408, and K414.

This sequence belongs to the ATP-dependent DNA ligase family. Mg(2+) serves as cofactor.

It catalyses the reaction ATP + (deoxyribonucleotide)n-3'-hydroxyl + 5'-phospho-(deoxyribonucleotide)m = (deoxyribonucleotide)n+m + AMP + diphosphate.. Functionally, DNA ligase that seals nicks in double-stranded DNA during DNA replication, DNA recombination and DNA repair. This Methanosphaerula palustris (strain ATCC BAA-1556 / DSM 19958 / E1-9c) protein is DNA ligase.